The following is a 225-amino-acid chain: Biosynthetic peptidoglycan transglycosylase (225 aa).

The helical transmembrane segment at 12–32 (IWFVAWRFLLLFVIVLFLFRF) threads the bilayer.

The protein belongs to the glycosyltransferase 51 family.

It is found in the cell inner membrane. It catalyses the reaction [GlcNAc-(1-&gt;4)-Mur2Ac(oyl-L-Ala-gamma-D-Glu-L-Lys-D-Ala-D-Ala)](n)-di-trans,octa-cis-undecaprenyl diphosphate + beta-D-GlcNAc-(1-&gt;4)-Mur2Ac(oyl-L-Ala-gamma-D-Glu-L-Lys-D-Ala-D-Ala)-di-trans,octa-cis-undecaprenyl diphosphate = [GlcNAc-(1-&gt;4)-Mur2Ac(oyl-L-Ala-gamma-D-Glu-L-Lys-D-Ala-D-Ala)](n+1)-di-trans,octa-cis-undecaprenyl diphosphate + di-trans,octa-cis-undecaprenyl diphosphate + H(+). The protein operates within cell wall biogenesis; peptidoglycan biosynthesis. In terms of biological role, peptidoglycan polymerase that catalyzes glycan chain elongation from lipid-linked precursors. In Marinomonas sp. (strain MWYL1), this protein is Biosynthetic peptidoglycan transglycosylase.